The following is a 552-amino-acid chain: Mothers against decapentaplegic homolog 4 (552 aa).

The segment at 1–322 (MDNMSITNTP…PISNHPAPEY (322 aa)) is mediates interaction with ZBTB7A. Residues 18-142 (SIVHSLMCHR…YERVVSPGID (125 aa)) form the MH1 domain. Residue K37 is modified to N6-acetyllysine. The interval 44–69 (VKKLKEKKDELDSLITAITTNGAHPS) is required for interaction with TSC22D1. Zn(2+) is bound at residue C71. K113 is covalently cross-linked (Glycyl lysine isopeptide (Lys-Gly) (interchain with G-Cter in SUMO2)). Zn(2+) is bound by residues C115, C127, and H132. The interval 264–297 (STTTWTGSRTAPYPPNLPHHQNGHLQHHPPMPPH) is disordered. The tract at residues 275–320 (PYPPNLPHHQNGHLQHHPPMPPHPGHYWPVHNELAFQPPISNHPAP) is SAD. In terms of domain architecture, MH2 spans 323 to 552 (WCSIAYFEMD…MPIADPQPLD (230 aa)). N6-acetyllysine occurs at positions 428 and 507. K519 is covalently cross-linked (Glycyl lysine isopeptide (Lys-Gly) (interchain with G-Cter in ubiquitin)).

Belongs to the dwarfin/SMAD family. Monomer; in the absence of TGF-beta activation. Heterotrimer; on TGF-beta activation. Heterotrimer composed of two molecules of a C-terminally phosphorylated R-SMAD molecule, SMAD2 or SMAD3, and one molecule of SMAD4 to form the transcriptional active SMAD2/SMAD3-SMAD4 complex. Found in a ternary complex composed of SMAD4, STK11/LKB1 and STK11IP. Found in a complex with SMAD1 and YY1. Identified in a complex that contains at least ZNF451, SMAD2, SMAD3 and SMAD4. Interacts with ATF2, COPS5, DACH1, MSG1, SKI, STK11/LKB1, STK11IP and TRIM33. Associates with ZNF423 or ZNF521 in response to BMP2 leading to activate transcription of BMP target genes. Interacts with USP9X. Interacts with RBPMS. Interacts with WWTR1 (via coiled-coil domain). Interacts with CITED1 and CITED2. Interacts with PDPK1 (via PH domain). Interacts with VPS39; this interaction affects heterodimer formation with SMAD3, but not with SMAD2, and leads to inhibition of SMAD3-dependent transcription activation. Interactions with VPS39 and SMAD2 may be mutually exclusive. Interacts (via MH2 domain) with ZNF451 (via N-terminal zinc-finger domains). Interacts with ZC3H3. Interacts weakly with ZNF8. Interacts with NUP93 and IPO7; translocates SMAD4 to the nucleus through the NPC upon BMP7 stimulation resulting in activation of SMAD4 signaling. Interacts with CREB3L1, the interaction takes place upon TGFB1 induction and SMAD4 acts as a CREB3L1 coactivator to induce the expression of genes involved in the assembly of collagen extracellular matrix. Interacts with DLX1. Interacts with ZBTB7A; the interaction is direct and stimulated by TGFB1. Interacts with CREBBP; the recruitment of this transcriptional coactivator is negatively regulated by ZBTB7A. Interacts with EP300; the interaction with this transcriptional coactivator is negatively regulated by ZBTB7A. Interacts with HDAC1. Interacts (via MH2 domain) with ZMIZ1 (via SP-RING-type domain); in the TGF-beta signaling pathway increases the activity of the SMAD3/SMAD4 transcriptional complex. Interacts (via N-terminus) with TSC22D1. Post-translationally, phosphorylated by PDPK1. In terms of processing, monoubiquitinated on Lys-519 by E3 ubiquitin-protein ligase TRIM33. Monoubiquitination hampers its ability to form a stable complex with activated SMAD2/3 resulting in inhibition of TGF-beta/BMP signaling cascade. Deubiquitination by USP9X restores its competence to mediate TGF-beta signaling.

It is found in the cytoplasm. The protein localises to the nucleus. Common SMAD (co-SMAD) is the coactivator and mediator of signal transduction by TGF-beta (transforming growth factor). Component of the heterotrimeric SMAD2/SMAD3-SMAD4 complex that forms in the nucleus and is required for the TGF-mediated signaling. Promotes binding of the SMAD2/SMAD4/FAST-1 complex to DNA and provides an activation function required for SMAD1 or SMAD2 to stimulate transcription. Component of the multimeric SMAD3/SMAD4/JUN/FOS complex which forms at the AP1 promoter site; required for synergistic transcriptional activity in response to TGF-beta. Acts synergistically with SMAD1 and YY1 in bone morphogenetic protein (BMP)-mediated cardiac-specific gene expression. Binds to SMAD binding elements (SBEs) (5'-GTCT/AGAC-3') within BMP response element (BMPRE) of cardiac activating regions. May act as a tumor suppressor. Positively regulates PDPK1 kinase activity by stimulating its dissociation from the 14-3-3 protein YWHAQ which acts as a negative regulator. In muscle physiology, plays a central role in the balance between atrophy and hypertrophy. When recruited by MSTN, promotes atrophy response via phosphorylated SMAD2/4. MSTN decrease causes SMAD4 release and subsequent recruitment by the BMP pathway to promote hypertrophy via phosphorylated SMAD1/5/8. The polypeptide is Mothers against decapentaplegic homolog 4 (SMAD4) (Sus scrofa (Pig)).